The chain runs to 666 residues: Fructose-1,6-bisphosphatase class 3 (666 aa).

The protein belongs to the FBPase class 3 family. Mn(2+) is required as a cofactor.

The enzyme catalyses beta-D-fructose 1,6-bisphosphate + H2O = beta-D-fructose 6-phosphate + phosphate. Its pathway is carbohydrate biosynthesis; gluconeogenesis. In Phocaeicola vulgatus (strain ATCC 8482 / DSM 1447 / JCM 5826 / CCUG 4940 / NBRC 14291 / NCTC 11154) (Bacteroides vulgatus), this protein is Fructose-1,6-bisphosphatase class 3.